We begin with the raw amino-acid sequence, 191 residues long: Adenylate kinase (191 aa).

Position 12–17 (12–17 (GSGKTT)) interacts with ATP. The interval 34–63 (STGDLLRAESAKKTERGLLIEKFTSQGELV) is NMP. AMP contacts are provided by residues Thr35, Arg40, 61 to 63 (ELV), 88 to 91 (GYPR), and Gln95. Residues 130–136 (GRSRGAD) form an LID region. Arg131 serves as a coordination point for ATP. AMP contacts are provided by Arg133 and Arg145. Residue Arg173 participates in ATP binding.

This sequence belongs to the adenylate kinase family. As to quaternary structure, monomer.

The protein resides in the cytoplasm. It carries out the reaction AMP + ATP = 2 ADP. The protein operates within purine metabolism; AMP biosynthesis via salvage pathway; AMP from ADP: step 1/1. Catalyzes the reversible transfer of the terminal phosphate group between ATP and AMP. Plays an important role in cellular energy homeostasis and in adenine nucleotide metabolism. The protein is Adenylate kinase of Helicobacter pylori (strain HPAG1).